Reading from the N-terminus, the 190-residue chain is Dynein axonemal light chain 1 (190 aa).

Residue Ala2 is modified to N-acetylalanine. LRR repeat units follow at residues 47–69, 70–93, 95–114, and 115–138; these read LANCEKLSLSTNCIEKIANLNGL, KNLRILSLGRNNIKNLNGLEAVGD, LEELWISYNFIEKLKGIHVM, and RKLKILYISNNLVKDWAEFVKLAE. Ser56 carries the post-translational modification Phosphoserine.

This sequence belongs to the dynein light chain LC1-type family. As to quaternary structure, interacts with ZMYND10 (via C-terminus). Interacts with DNAH5, a outer arm dynein heavy chain. Interacts with tubulin located within the A-tubule of the outer doublets in a ATP-independent manner.

The protein localises to the cytoplasm. It is found in the cytoskeleton. The protein resides in the cilium axoneme. In terms of biological role, part of the multisubunit axonemal ATPase complexes that generate the force for cilia motility and govern beat frequency. Component of the outer arm dynein (ODA). May be involved in a mechanosensory feedback mechanism controlling ODA activity based on external conformational cues by tethering the outer arm dynein heavy chain (DNAH5) to the microtubule within the axoneme. Important for ciliary function in the airways and for the function of the cilia that produce the nodal flow essential for the determination of the left-right asymmetry. In Rattus norvegicus (Rat), this protein is Dynein axonemal light chain 1.